Consider the following 314-residue polypeptide: Malate dehydrogenase (314 aa).

Residues 13–18 and D37 each bind NAD(+); that span reads GGGQIG. Substrate is bound by residues R88 and R94. NAD(+) contacts are provided by residues N101 and 124-126; that span reads VAN. 2 residues coordinate substrate: N126 and R157. H181 functions as the Proton acceptor in the catalytic mechanism.

It belongs to the LDH/MDH superfamily. MDH type 3 family.

The enzyme catalyses (S)-malate + NAD(+) = oxaloacetate + NADH + H(+). In terms of biological role, catalyzes the reversible oxidation of malate to oxaloacetate. The sequence is that of Malate dehydrogenase from Myxococcus xanthus.